Consider the following 473-residue polypeptide: Photosystem II CP43 reaction center protein (473 aa).

Positions 1 to 14 (MKILYSQRRFYHVE) are excised as a propeptide. Position 15 is an N-acetylthreonine (threonine 15). A Phosphothreonine modification is found at threonine 15. Transmembrane regions (helical) follow at residues 69 to 93 (LFEV…PHLA), 134 to 155 (LIGP…KDKN), 178 to 200 (KALY…RKIT), 255 to 275 (KPFA…LSYS), and 291 to 312 (WFNN…ASQA). Glutamate 367 provides a ligand contact to [CaMn4O5] cluster. A helical membrane pass occupies residues 447 to 471 (RARAAAAGFEKGIDRDFEPVLSMTP).

The protein belongs to the PsbB/PsbC family. PsbC subfamily. In terms of assembly, PSII is composed of 1 copy each of membrane proteins PsbA, PsbB, PsbC, PsbD, PsbE, PsbF, PsbH, PsbI, PsbJ, PsbK, PsbL, PsbM, PsbT, PsbX, PsbY, PsbZ, Psb30/Ycf12, at least 3 peripheral proteins of the oxygen-evolving complex and a large number of cofactors. It forms dimeric complexes. Binds multiple chlorophylls and provides some of the ligands for the Ca-4Mn-5O cluster of the oxygen-evolving complex. It may also provide a ligand for a Cl- that is required for oxygen evolution. PSII binds additional chlorophylls, carotenoids and specific lipids. serves as cofactor.

It localises to the plastid. The protein resides in the chloroplast thylakoid membrane. In terms of biological role, one of the components of the core complex of photosystem II (PSII). It binds chlorophyll and helps catalyze the primary light-induced photochemical processes of PSII. PSII is a light-driven water:plastoquinone oxidoreductase, using light energy to abstract electrons from H(2)O, generating O(2) and a proton gradient subsequently used for ATP formation. This chain is Photosystem II CP43 reaction center protein, found in Physcomitrium patens (Spreading-leaved earth moss).